A 446-amino-acid polypeptide reads, in one-letter code: Deoxyguanosinetriphosphate triphosphohydrolase-like protein (446 aa).

The disordered stretch occupies residues 1–28; that stretch reads MSSSVWQERRHGEDKQRRNDHRSPFQRD. Basic and acidic residues predominate over residues 7 to 28; the sequence is QERRHGEDKQRRNDHRSPFQRD. One can recognise an HD domain in the interval 59–252; sequence RLTHSLEVSQ…MELADDIAYA (194 aa).

The protein belongs to the dGTPase family. Type 2 subfamily.

This Shewanella sp. (strain MR-7) protein is Deoxyguanosinetriphosphate triphosphohydrolase-like protein.